A 136-amino-acid chain; its full sequence is Protein NrdI (136 aa).

This sequence belongs to the NrdI family.

Its function is as follows. Probably involved in ribonucleotide reductase function. The chain is Protein NrdI from Escherichia coli O1:K1 / APEC.